Here is a 695-residue protein sequence, read N- to C-terminus: LGLCLAAPRKSVRWCTISPAEAAKCAKFQRNMKKVRGPSVSCIRKTSSFECIQAIAANKADAVTLDGGLVYEAGLHPYKLRPVAAEVYQTRGKPQTRYYAVAVVKKGSGFQLNQLQGVKSCHTGLGRSAGWNIPIGTLRPYLNWTGPPEPLQKAVANFFSASCVPCADGKQYPNLCRLCAGTEADKCACSSQEPYFGYSGAFKCLENGAGDVAFVKDSTVFENLPDEADRDKYELLCPDNTRKPVDAFKECHLARVPSHAVVARSVDGREDLIWRLLHRAQEEFGRNKSSAFQLFKSTPENKDLLFKDSALGFVRIPSQIDSGLYLGANYLTATQNLRETAAEVAARRERVVWCAVGPEEERKCKQWSDVSNRKVACASASTTEECIALVLKGEADALNLDGGFIYVAGKCGLVPVLAENQKSQNSNAPDCVHRPPEGYLAVAVVRKSDADLTWNSLSGKKSCHTGVGRTAAWNIPMGLLFNQTGSCKFDKFFSQSCAPGADPQSSLCALCVGNNENENKCMPNSEERYYGYTGAFRCLAEKAGDVAFVKDVTVLQNTDGKNSEPWAKDLKQEDFELLCLDGTRKPVAEAESCHLARAPNHAVVSQSDRAQHLKKVLFLQQDQFGGNGPDCPGKFCLFKSETKNLLFNDNTECLAELQGKTTYEQYLGSEYVTSITNLRRCSSSPLLEACAFLRA.

Residues 1-6 form the signal peptide; it reads LGLCLA. Transferrin-like domains lie at 12–339 and 351–680; these read VRWC…NLRE and VVWC…NLRR. 2 disulfide bridges follow: Cys-15/Cys-51 and Cys-25/Cys-42. Residue Asp-66 participates in Fe(3+) binding. Lys-79 is a catalytic residue. Tyr-98 is a Fe(3+) binding site. Intrachain disulfides connect Cys-121–Cys-204, Cys-163–Cys-179, Cys-166–Cys-189, Cys-176–Cys-187, and Cys-237–Cys-251. 4 residues coordinate hydrogencarbonate: Thr-123, Arg-127, Ala-129, and Gly-130. Asn-143 carries an N-linked (GlcNAc...) asparagine glycan. Tyr-198 provides a ligand contact to Fe(3+). His-259 contributes to the Fe(3+) binding site. Ser-265 (nucleophile) is an active-site residue. Residue Asn-287 is glycosylated (N-linked (GlcNAc...) asparagine). Intrachain disulfides connect Cys-354–Cys-386 and Cys-364–Cys-377. Asp-401 contacts Fe(3+). 8 disulfide bridges follow: Cys-411-Cys-690, Cys-431-Cys-653, Cys-463-Cys-538, Cys-487-Cys-681, Cys-497-Cys-511, Cys-508-Cys-521, Cys-579-Cys-593, and Cys-631-Cys-636. Position 436 (Pro-436) interacts with D-glucose. Residue Tyr-439 coordinates Fe(3+). Positions 465, 469, 471, and 472 each coordinate hydrogencarbonate. Asn-482 carries N-linked (GlcNAc...) asparagine glycosylation. Tyr-532 contributes to the Fe(3+) binding site. Residue Asn-600 participates in D-glucose binding. Fe(3+) is bound at residue His-601. D-glucose is bound at residue Tyr-666.

The protein belongs to the transferrin family. Monomer. Found in a complex with LTF, CLU, EPPIN and SEMG1. Found in a complex with MPO and LTF; interacts directly with CP, allows Fe(3+) incorporation into LTF and activation of CP ferroxidase activity. In terms of processing, poly-N-acetyllactosaminic carbohydrate moiety seems to be needed for TLR4 activation.

It localises to the secreted. The protein resides in the cytoplasmic granule. Its function is as follows. Transferrins are iron binding transport proteins which can bind two Fe(3+) ions in association with the binding of an anion, usually bicarbonate. Major iron-binding and multifunctional protein found in exocrine fluids such as breast milk and mucosal secretions. Has antimicrobial activity, which depends on the extracellular cation concentration. Antimicrobial properties include bacteriostasis, which is related to its ability to sequester free iron and thus inhibit microbial growth, as well as direct bactericidal properties leading to the release of lipopolysaccharides from the bacterial outer membrane. Can also prevent bacterial biofilm development in P.aeruginosa infection. Has weak antifungal activity against C.albicans. Has anabolic, differentiating and anti-apoptotic effects on osteoblasts and can also inhibit osteoclastogenesis, possibly playing a role in the regulation of bone growth. Promotes binding of species C adenoviruses to epithelial cells, promoting adenovirus infection. Can inhibit papillomavirus infections. Stimulates the TLR4 signaling pathway leading to NF-kappa-B activation and subsequent pro-inflammatory cytokine production while also interfering with the lipopolysaccharide (LPS)-stimulated TLR4 signaling. Inhibits neutrophil granulocyte migration to sites of apoptosis, when secreted by apoptotic cells. Stimulates VEGFA-mediated endothelial cell migration and proliferation. Binds heparin, chondroitin sulfate and possibly other glycosaminoglycans (GAGs). Also binds specifically to pneumococcal surface protein A (PspA), the lipid A portion of bacterial lipopolysaccharide (LPS), lysozyme and DNA. Functionally, lactoferricin binds to the bacterial surface and is crucial for the bactericidal functions. Has some antiviral activity against papillomavirus infection. N-terminal region shows strong antifungal activity against C.albicans. Contains two BBXB heparin-binding consensus sequences that appear to form the predominate functional GAG-binding site. In terms of biological role, the lactotransferrin transferrin-like domain 1 functions as a serine protease of the peptidase S60 family that cuts arginine rich regions. This function contributes to the antimicrobial activity. Shows a preferential cleavage at -Arg-Ser-Arg-Arg-|- and -Arg-Arg-Ser-Arg-|-, and of Z-Phe-Arg-|-aminomethylcoumarin sites. In Equus caballus (Horse), this protein is Lactotransferrin (LTF).